A 159-amino-acid chain; its full sequence is uncharacterized protein (159 aa).

Basic and acidic residues predominate over residues 1 to 13 (MESRPSGRQHASE). Residues 1 to 35 (MESRPSGRQHASEGDGDQSPTQCAGMRSSGRSDQP) are disordered.

This is an uncharacterized protein from Homo sapiens (Human).